A 219-amino-acid polypeptide reads, in one-letter code: Large ribosomal subunit protein uL1 (219 aa).

Belongs to the universal ribosomal protein uL1 family. As to quaternary structure, part of the 50S ribosomal subunit.

In terms of biological role, probably involved in E site tRNA release. Binds directly to 23S rRNA. Its function is as follows. Protein L1 is also a translational repressor protein, it controls the translation of its operon by binding to its mRNA. The chain is Large ribosomal subunit protein uL1 from Methanocaldococcus jannaschii (strain ATCC 43067 / DSM 2661 / JAL-1 / JCM 10045 / NBRC 100440) (Methanococcus jannaschii).